An 85-amino-acid chain; its full sequence is Small proline-rich protein 2D (85 aa).

The segment covering 1–11 (MSYQQQQCKQP) has biased composition (low complexity). Positions 1–20 (MSYQQQQCKQPCQPPPVCPP) are disordered. Repeat copies occupy residues 21-29 (KKCPEPCPP), 30-38 (LKCPEPCPP), 39-47 (PKCPEPCPP), and 48-56 (PKCPEPCPE). A 4 X 9 AA approximate tandem repeats region spans residues 21–56 (KKCPEPCPPLKCPEPCPPPKCPEPCPPPKCPEPCPE). The segment at 57 to 85 (PCPPPSCQQKCPPAQPPPPCQQKCPPKSK) is disordered.

It belongs to the cornifin (SPRR) family. As to expression, expressed in uterus.

The protein resides in the cytoplasm. Functionally, cross-linked envelope protein of keratinocytes. It is a keratinocyte protein that first appears in the cell cytosol, but ultimately becomes cross-linked to membrane proteins by transglutaminase. All that results in the formation of an insoluble envelope beneath the plasma membrane. This Mus musculus (Mouse) protein is Small proline-rich protein 2D (Sprr2d).